The sequence spans 418 residues: L-rhamnose isomerase (418 aa).

The Mn(2+) site is built by histidine 262, aspartate 294, and aspartate 296.

It belongs to the rhamnose isomerase family. As to quaternary structure, homotetramer. Requires Mn(2+) as cofactor.

The protein localises to the cytoplasm. It carries out the reaction L-rhamnopyranose = L-rhamnulose. It functions in the pathway carbohydrate degradation; L-rhamnose degradation; glycerone phosphate from L-rhamnose: step 1/3. Its function is as follows. Catalyzes the interconversion of L-rhamnose and L-rhamnulose. The protein is L-rhamnose isomerase of Yersinia pestis bv. Antiqua (strain Antiqua).